We begin with the raw amino-acid sequence, 334 residues long: Ornithine carbamoyltransferase (334 aa).

Residues 56–59, glutamine 83, arginine 107, and 134–137 each bind carbamoyl phosphate; these read STRT and HPTQ. Residues asparagine 168, aspartate 232, and 236 to 237 contribute to the L-ornithine site; that span reads SM. Carbamoyl phosphate-binding positions include 274–275 and arginine 320; that span reads CL.

This sequence belongs to the aspartate/ornithine carbamoyltransferase superfamily. OTCase family.

It localises to the cytoplasm. The catalysed reaction is carbamoyl phosphate + L-ornithine = L-citrulline + phosphate + H(+). The protein operates within amino-acid biosynthesis; L-arginine biosynthesis; L-arginine from L-ornithine and carbamoyl phosphate: step 1/3. Reversibly catalyzes the transfer of the carbamoyl group from carbamoyl phosphate (CP) to the N(epsilon) atom of ornithine (ORN) to produce L-citrulline. The polypeptide is Ornithine carbamoyltransferase (Escherichia coli (strain 55989 / EAEC)).